The following is a 613-amino-acid chain: Pentatricopeptide repeat-containing protein At2g45350, chloroplastic (613 aa).

13 PPR repeats span residues 85 to 119 (DPFL…GVSV), 120 to 154 (DKFS…GLWS), 155 to 185 (DLFL…MPKR), 186 to 216 (DSVS…MPME), 219 to 250 (NLIS…MPEK), 251 to 285 (DLIS…DVVT), 286 to 312 (WATM…MPHR), 313 to 347 (DVVA…SHLL), 349 to 383 (DDTT…QFYL), 384 to 414 (GGKL…IENK), 415 to 449 (SIDH…SLKP), 450 to 480 (DDIT…MRRK), and 486 to 516 (RLQH…MPVE). A type E motif region spans residues 521–596 (IWRTFLTACS…IPGCSWIELD (76 aa)).

The protein belongs to the PPR family. PCMP-E subfamily. As to quaternary structure, interacts with DYW1.

The protein resides in the plastid. Its subcellular location is the chloroplast. In terms of biological role, plays a major role in chloroplast RNA editing. Acts as a site-recognition transacting factor to recruit C-deaminase. Involved in single RNA editing events. Required for the edition of the site 1 of ndhD (ndhD-1 site corresponding to cytidine-2), which is a plastid-encoded subunit of the NADH-plastoquinone oxidoreductase. The interaction with DYW1 is required for its function in editing the ndhD-1 site. The chain is Pentatricopeptide repeat-containing protein At2g45350, chloroplastic (CRR4) from Arabidopsis thaliana (Mouse-ear cress).